A 325-amino-acid chain; its full sequence is Glutarate 2-hydroxylase (325 aa).

Positions 160, 162, and 292 each coordinate Fe cation.

This sequence belongs to the glutarate hydroxylase family. As to quaternary structure, homotetramer. Fe(2+) serves as cofactor.

The enzyme catalyses glutarate + 2-oxoglutarate + O2 = (S)-2-hydroxyglutarate + succinate + CO2. It participates in amino-acid degradation. Its function is as follows. Acts as an alpha-ketoglutarate-dependent dioxygenase catalyzing hydroxylation of glutarate (GA) to L-2-hydroxyglutarate (L2HG). Functions in a L-lysine degradation pathway that proceeds via cadaverine, glutarate and L-2-hydroxyglutarate. Is extremely specific for glutarate, but it can use both 2-oxoglutarate and 2-oxoadipate (2OA) as a cosubstrate for L2HG formation. This is Glutarate 2-hydroxylase from Pseudomonas putida (strain ATCC 47054 / DSM 6125 / CFBP 8728 / NCIMB 11950 / KT2440).